The following is a 283-amino-acid chain: Bifunctional protein FolD (283 aa).

NADP(+)-binding positions include 166–168 (GAS), Ser-191, and Ile-232.

The protein belongs to the tetrahydrofolate dehydrogenase/cyclohydrolase family. Homodimer.

The enzyme catalyses (6R)-5,10-methylene-5,6,7,8-tetrahydrofolate + NADP(+) = (6R)-5,10-methenyltetrahydrofolate + NADPH. It carries out the reaction (6R)-5,10-methenyltetrahydrofolate + H2O = (6R)-10-formyltetrahydrofolate + H(+). It participates in one-carbon metabolism; tetrahydrofolate interconversion. Its function is as follows. Catalyzes the oxidation of 5,10-methylenetetrahydrofolate to 5,10-methenyltetrahydrofolate and then the hydrolysis of 5,10-methenyltetrahydrofolate to 10-formyltetrahydrofolate. The sequence is that of Bifunctional protein FolD from Chromobacterium violaceum (strain ATCC 12472 / DSM 30191 / JCM 1249 / CCUG 213 / NBRC 12614 / NCIMB 9131 / NCTC 9757 / MK).